An 85-amino-acid chain; its full sequence is MVVNIEVFTSPTCPYCPMAIEVVDEAKKEFGDKIDVEKIDIMVDREKAIEYGLMAVPAIAINGVVRFVGAPSREELFEAINDEME.

The Glutaredoxin domain occupies 2–85 (VVNIEVFTSP…LFEAINDEME (84 aa)). Cysteines 13 and 16 form a disulfide.

Belongs to the glutaredoxin family.

It is found in the cytoplasm. Its function is as follows. Acts to maintain redox homeostasis; functions as a protein disulfide reductase. The chain is Probable Thioredoxin from Methanothermobacter thermautotrophicus (strain ATCC 29096 / DSM 1053 / JCM 10044 / NBRC 100330 / Delta H) (Methanobacterium thermoautotrophicum).